A 492-amino-acid polypeptide reads, in one-letter code: Protein nucleotidyltransferase YdiU (492 aa).

ATP contacts are provided by Gly-91, Gly-93, Arg-94, Lys-114, Asp-126, Gly-127, Arg-180, and Arg-187. The active-site Proton acceptor is the Asp-256. 2 residues coordinate Mg(2+): Asn-257 and Asp-266. Asp-266 serves as a coordination point for ATP.

It belongs to the SELO family. Mg(2+) is required as a cofactor. Requires Mn(2+) as cofactor.

The catalysed reaction is L-seryl-[protein] + ATP = 3-O-(5'-adenylyl)-L-seryl-[protein] + diphosphate. The enzyme catalyses L-threonyl-[protein] + ATP = 3-O-(5'-adenylyl)-L-threonyl-[protein] + diphosphate. It catalyses the reaction L-tyrosyl-[protein] + ATP = O-(5'-adenylyl)-L-tyrosyl-[protein] + diphosphate. It carries out the reaction L-histidyl-[protein] + UTP = N(tele)-(5'-uridylyl)-L-histidyl-[protein] + diphosphate. The catalysed reaction is L-seryl-[protein] + UTP = O-(5'-uridylyl)-L-seryl-[protein] + diphosphate. The enzyme catalyses L-tyrosyl-[protein] + UTP = O-(5'-uridylyl)-L-tyrosyl-[protein] + diphosphate. In terms of biological role, nucleotidyltransferase involved in the post-translational modification of proteins. It can catalyze the addition of adenosine monophosphate (AMP) or uridine monophosphate (UMP) to a protein, resulting in modifications known as AMPylation and UMPylation. This is Protein nucleotidyltransferase YdiU from Synechococcus sp. (strain ATCC 27144 / PCC 6301 / SAUG 1402/1) (Anacystis nidulans).